A 139-amino-acid chain; its full sequence is Actin-depolymerizing factor 4 (139 aa).

The 135-residue stretch at 5-139 (SSGVAIHDDC…SLDALKDRVK (135 aa)) folds into the ADF-H domain.

It belongs to the actin-binding proteins ADF family. Interacts with LECRK1 (via kinase domain).

The protein resides in the cytoplasm. It localises to the cytoskeleton. Functionally, actin-depolymerizing protein. Severs actin filaments (F-actin) and binds to actin monomers. Involved in innate immunity. Required for the expression of defense-related genes PR1A, LOX2 and CHS1 upon biotic stresses. Required for basal resistance to the fungal blast (Magnaporthe grisea), bacterial blight (Xanthomonas oryzae pv. oryzae, Xoo) and the herbivorous insect brown planthopper (Nilaparvata lugens, BPH). Involved in the promotion of seed germination. Required for the expression of alpha-amylase genes during seed germination. In Oryza sativa subsp. japonica (Rice), this protein is Actin-depolymerizing factor 4 (ADF4).